The following is a 100-amino-acid chain: A-type ATP synthase subunit F (100 aa).

This sequence belongs to the V-ATPase F subunit family. Has multiple subunits with at least A(3), B(3), C, D, E, F, H, I and proteolipid K(x).

Its subcellular location is the cell membrane. Component of the A-type ATP synthase that produces ATP from ADP in the presence of a proton gradient across the membrane. The sequence is that of A-type ATP synthase subunit F from Methanocorpusculum labreanum (strain ATCC 43576 / DSM 4855 / Z).